We begin with the raw amino-acid sequence, 285 residues long: Nucleotide-binding protein in ptsN-ptsO intergenic region (285 aa).

8 to 15 (GRSGSGKS) is an ATP binding site. 60-63 (DARN) is a GTP binding site.

This sequence belongs to the RapZ-like family.

Displays ATPase and GTPase activities. This Stutzerimonas stutzeri (Pseudomonas stutzeri) protein is Nucleotide-binding protein in ptsN-ptsO intergenic region.